The following is a 341-amino-acid chain: MAP3K12-binding inhibitory protein 1 (341 aa).

Serine 91 is modified (phosphoserine). Residues lysine 94, lysine 127, lysine 137, lysine 151, and lysine 233 each participate in a glycyl lysine isopeptide (Lys-Gly) (interchain with G-Cter in SUMO2) cross-link. The interaction with MAP3K12 stretch occupies residues 170–341 (AEINENNVRE…EADSMAAHLP (172 aa)). The tract at residues 269 to 283 (IYQRIKKLEDKILEL) is leucine-zipper 1. Lysine 299 carries the post-translational modification N6-acetyllysine; alternate. Lysine 299 participates in a covalent cross-link: Glycyl lysine isopeptide (Lys-Gly) (interchain with G-Cter in SUMO2); alternate. Glycyl lysine isopeptide (Lys-Gly) (interchain with G-Cter in SUMO2) cross-links involve residues lysine 302 and lysine 323. Positions 312–327 (LAELDEKISALKRALL) are leucine-zipper 2.

In terms of assembly, component of the ADA2A-containing complex (ATAC), composed of KAT14, KAT2A, TADA2L, TADA3L, ZZ3, MBIP, WDR5, YEATS2, CCDC101 and DR1. In the complex, it probably interacts directly with KAT2A, KAT14 and WDR5.

Its subcellular location is the nucleus. It is found in the cytoplasm. Its function is as follows. Inhibits the MAP3K12 activity to induce the activation of the JNK/SAPK pathway. Component of the ATAC complex, a complex with histone acetyltransferase activity on histones H3 and H4. This Mus musculus (Mouse) protein is MAP3K12-binding inhibitory protein 1 (Mbip).